A 600-amino-acid chain; its full sequence is Baculoviral IAP repeat-containing protein 3 (600 aa).

One copy of the BIR 1 repeat lies at Glu27–Val94. Residue Ser138 is modified to Phosphoserine. BIR repeat units lie at residues Glu167 to Leu233 and His253 to Leu320. Residues Cys290, Cys293, His310, and Cys317 each coordinate Zn(2+). The CARD domain maps to Glu436 to Gln525. An RING-type zinc finger spans residues Cys553–Arg588.

This sequence belongs to the IAP family. As to quaternary structure, interacts with PRSS25; the interaction inhibits apoptotic suppressor activity. The BIR motifs region interacts with TNF receptor associated factors 1 and 2 (TRAF1 and TRAF2) to form a heteromeric complex, which is then recruited to the tumor necrosis factor receptor 2 (TNFR2). Interaction with TRAF2 is required for ubiquitination of IKBKE, degradation of NFKBIA and activation of NF-kappa-B. Interacts with RIP1, RIP2, RIP3, RIP4 and USP19. Post-translationally, auto-ubiquitinated and degraded by the proteasome in apoptotic cells.

The protein resides in the cytoplasm. It localises to the nucleus. It carries out the reaction S-ubiquitinyl-[E2 ubiquitin-conjugating enzyme]-L-cysteine + [acceptor protein]-L-lysine = [E2 ubiquitin-conjugating enzyme]-L-cysteine + N(6)-ubiquitinyl-[acceptor protein]-L-lysine.. Its activity is regulated as follows. USP19 regulates the stability of BIRC3/c-IAP2 by preventing its ubiquitination. In terms of biological role, multi-functional protein which regulates not only caspases and apoptosis, but also modulates inflammatory signaling and immunity, mitogenic kinase signaling and cell proliferation, as well as cell invasion and metastasis. Acts as an E3 ubiquitin-protein ligase regulating NF-kappa-B signaling and regulates both canonical and non-canonical NF-kappa-B signaling by acting in opposite directions: acts as a positive regulator of the canonical pathway and suppresses constitutive activation of non-canonical NF-kappa-B signaling. The target proteins for its E3 ubiquitin-protein ligase activity include: RIPK1, RIPK2, RIPK3, RIPK4, CASP3, CASP7, CASP8, IKBKE, TRAF1, and BCL10. Acts as an important regulator of innate immune signaling via regulation of Toll-like receptors (TLRs), Nodlike receptors (NLRs) and RIG-I like receptors (RLRs), collectively referred to as pattern recognition receptors (PRRs). Protects cells from spontaneous formation of the ripoptosome, a large multi-protein complex that has the capability to kill cancer cells in a caspase-dependent and caspase-independent manner. Suppresses ripoptosome formation by ubiquitinating RIPK1 and CASP8. This Mus musculus (Mouse) protein is Baculoviral IAP repeat-containing protein 3 (Birc3).